The sequence spans 165 residues: Large ribosomal subunit protein uL11A (165 aa).

N,N-dimethylproline; by NTM1 is present on P2. K4 and K11 each carry N6,N6,N6-trimethyllysine; by RKM2. A phosphoserine mark is found at S25 and S38. The residue at position 67 (R67) is an N5-methylarginine; by RMT2. Glycyl lysine isopeptide (Lys-Gly) (interchain with G-Cter in ubiquitin) cross-links involve residues K130 and K146.

It belongs to the universal ribosomal protein uL11 family. In terms of assembly, component of the large ribosomal subunit (LSU). Mature yeast ribosomes consist of a small (40S) and a large (60S) subunit. The 40S small subunit contains 1 molecule of ribosomal RNA (18S rRNA) and 33 different proteins (encoded by 57 genes). The large 60S subunit contains 3 rRNA molecules (25S, 5.8S and 5S rRNA) and 46 different proteins (encoded by 81 genes). Post-translationally, it appears that the main modified species for L12 contains 6 methyl groups, 2 on Pro-2, 3 on Lys-4 and 1 on Arg-67. Although not reproduced with a second method, methylation at Lys-11 cannot be ruled out.

The protein localises to the cytoplasm. Its function is as follows. Component of the ribosome, a large ribonucleoprotein complex responsible for the synthesis of proteins in the cell. The small ribosomal subunit (SSU) binds messenger RNAs (mRNAs) and translates the encoded message by selecting cognate aminoacyl-transfer RNA (tRNA) molecules. The large subunit (LSU) contains the ribosomal catalytic site termed the peptidyl transferase center (PTC), which catalyzes the formation of peptide bonds, thereby polymerizing the amino acids delivered by tRNAs into a polypeptide chain. The nascent polypeptides leave the ribosome through a tunnel in the LSU and interact with protein factors that function in enzymatic processing, targeting, and the membrane insertion of nascent chains at the exit of the ribosomal tunnel. The sequence is that of Large ribosomal subunit protein uL11A from Saccharomyces cerevisiae (strain ATCC 204508 / S288c) (Baker's yeast).